The chain runs to 191 residues: Cytochrome b-245 light chain (191 aa).

Over 2–7 (GQIEWA) the chain is Cytoplasmic. A helical membrane pass occupies residues 8 to 30 (MWANEQALASGLILITGGIVATA). Residues 31–35 (GQFTQ) lie on the Extracellular side of the membrane. A helical membrane pass occupies residues 36-53 (WYLGAYSIAAGVLVCLLE). Residues 54–69 (YPRGKRSKGSTMERCG) lie on the Cytoplasmic side of the membrane. The stretch at 70-80 (QKYLTRVVKLF) is an intramembrane region. Over 81-86 (GPLTRN) the chain is Cytoplasmic. A helical transmembrane segment spans residues 87–104 (YYIRAFLHLGLAVPAGFL). Leu-105 is a topological domain (extracellular). The helical transmembrane segment at 106-126 (ATILGTACLAIASGIYLLAAI) threads the bilayer. Over 127–191 (RGEQWSPIEP…NPMPVNDEVV (65 aa)) the chain is Cytoplasmic. Residues 134–191 (IEPKPKERPQIGGTIKQPPSNPPPRPPAEARKKPSEEAAGVPTGGPQENPMPVNDEVV) are disordered. Thr-147 bears the Phosphothreonine mark. Residue Lys-149 forms a Glycyl lysine isopeptide (Lys-Gly) (interchain with G-Cter in ubiquitin) linkage. Ser-168 bears the Phosphoserine mark.

The protein belongs to the p22phox family. As to quaternary structure, component of the phagocyte NADPH oxidase core complex/cytochrome b558 complex, composed of CYBB (heavy chain (beta)) and CYBA (light chain (alpha)). Component of the phagocyte NADPH oxidase complex composed of an obligatory core heterodimer formed by the membrane proteins CYBA and CYBB and the cytosolic regulatory subunits NCF1/p47-phox, NCF2/p67-phox, NCF4/p40-phox and the small GTPase RAC1 or RAC2. Interacts with NCF1 (via SH3 domain). Interacts with SH3PXD2A. Interacts with DUOX1, DUOX2 and TPO. Interacts with NOX4; this interaction mediates superoxide generation. Interacts with calprotectin (S100A8/9). Interacts with GBP7. Interacts with NOXO1. Forms a heterodimer with NOX3 and is essential for activity and cell membrane localization of NOX3. Interacts with NOX1. In terms of processing, phosphorylation at Thr-147 enhances NADPH oxidase activity by promoting NCF1/p47-phox binding. Ubiquitinated at Lys-149 likely by RNF145.

The protein localises to the cell membrane. Subunit of NADPH oxidase complexes that is required for the NADPH oxidase activity that generates, in various cell types, superoxide from molecular oxygen utilizing NADPH as an electron donor. Subunit of the phagocyte NADPH oxidase complex that mediates the transfer of electrons from cytosolic NADPH to O2 to produce the superoxide anion (O2(-)). In the activated complex, electrons are first transferred from NADPH to flavin adenine dinucleotide (FAD) and subsequently transferred via two heme molecules to molecular oxygen, producing superoxide through an outer-sphere reaction. Activation of the NADPH oxidase complex is initiated by the assembly of cytosolic subunits of the NADPH oxidase complex with the core NADPH oxidase complex to form a complex at the plasma membrane or phagosomal membrane. This activation process is initiated by phosphorylation dependent binding of the cytosolic NCF1/p47-phox subunit to the C-terminus of CYBA/p22-phox. Aassociates with NOX3 to form a functional NADPH oxidase constitutively generating superoxide. The polypeptide is Cytochrome b-245 light chain (Bos taurus (Bovine)).